Consider the following 580-residue polypeptide: V-type proton ATPase catalytic subunit A (580 aa).

Glycine 209–threonine 216 serves as a coordination point for ATP.

This sequence belongs to the ATPase alpha/beta chains family. V-ATPase is a heteromultimeric enzyme composed of a peripheral catalytic V1 complex (main components: subunits A, B, C, D, E, and F) attached to an integral membrane V0 proton pore complex (main component: the proteolipid protein).

It carries out the reaction ATP + H2O + 4 H(+)(in) = ADP + phosphate + 5 H(+)(out). Functionally, catalytic subunit of the peripheral V1 complex of vacuolar ATPase. V-ATPase vacuolar ATPase is responsible for acidifying a variety of intracellular compartments in eukaryotic cells. This chain is V-type proton ATPase catalytic subunit A, found in Hordeum vulgare (Barley).